The sequence spans 197 residues: Elongation factor Ts (197 aa).

Residues 81–84 (TDFV) are involved in Mg(2+) ion dislocation from EF-Tu.

The protein belongs to the EF-Ts family.

Its subcellular location is the cytoplasm. Functionally, associates with the EF-Tu.GDP complex and induces the exchange of GDP to GTP. It remains bound to the aminoacyl-tRNA.EF-Tu.GTP complex up to the GTP hydrolysis stage on the ribosome. The polypeptide is Elongation factor Ts (Petrotoga mobilis (strain DSM 10674 / SJ95)).